The chain runs to 61 residues: uncharacterized protein (61 aa).

Residues 39-61 (PRPFTPGLADPRRLGPRRVQAAQ) form a disordered region.

This is an uncharacterized protein from Pan troglodytes (Chimpanzee).